The sequence spans 685 residues: Linoleate 9/13-lipoxygenase (685 aa).

The N-terminal stretch at Met-1 to Ala-19 is a signal peptide. The region spanning Ala-122 to Ile-685 is the Lipoxygenase domain. The Fe cation site is built by His-377, His-382, His-555, Asn-559, and Ile-685.

It belongs to the lipoxygenase family. As to quaternary structure, monomer. It depends on Fe cation as a cofactor.

It is found in the periplasm. It catalyses the reaction (9Z,12Z)-octadecadienoate + O2 = (9S)-hydroperoxy-(10E,12Z)-octadecadienoate. It carries out the reaction (9Z)-octadecenoate + O2 = (8E,10S)-10-hydroperoxy-octadeca-8-enoate. The enzyme catalyses (9Z,12Z)-octadecadienoate + O2 = (8E,10S,12Z)-10-hydroperoxyoctadeca-8,12-dienoate. The catalysed reaction is (9Z,12Z,15Z)-octadecatrienoate + O2 = (8E,10S,12Z,15Z)-10-hydroperoxyoctadeca-8,12,15-trienoate. It catalyses the reaction (9Z,12Z)-octadecadienoate + O2 = (13S)-hydroperoxy-(9Z,11E)-octadecadienoate. It carries out the reaction (9Z,12Z,15Z)-octadecatrienoate + O2 = (13S)-hydroperoxy-(9Z,11E,15Z)-octadecatrienoate. Its activity is regulated as follows. Inhibited by Ba(2+), Zn(2+) and Fe(3+). In terms of biological role, in presence of oxygen, converts linoleate into (9S)-hydroperoxy-10,12-octadecenoate (9HPOD), which spontaneously decomposes to the corresponding 9-hydroxy-10,12-octadecenoate (9HOD), and into 13-hydroperoxy-9,11-octadecenoate (13HPOD) which spontaneously decomposes to the corresponding 13-hydroxy-9,11-octadecenoate (13HOD). Also active on linolenate. To a lesser extent, is also able to convert oleate into (10S)-hydroperoxy-8E-octadecenoate, which spontaneously decomposes to the corresponding 10-hydroxy-8E-octadecenoate. Is almost not active on arachidonate. The polypeptide is Linoleate 9/13-lipoxygenase (lox) (Pseudomonas aeruginosa).